Consider the following 194-residue polypeptide: 3-isopropylmalate dehydratase small subunit (194 aa).

The protein belongs to the LeuD family. LeuD type 1 subfamily. As to quaternary structure, heterodimer of LeuC and LeuD.

It carries out the reaction (2R,3S)-3-isopropylmalate = (2S)-2-isopropylmalate. Its pathway is amino-acid biosynthesis; L-leucine biosynthesis; L-leucine from 3-methyl-2-oxobutanoate: step 2/4. Its function is as follows. Catalyzes the isomerization between 2-isopropylmalate and 3-isopropylmalate, via the formation of 2-isopropylmaleate. This chain is 3-isopropylmalate dehydratase small subunit, found in Limosilactobacillus fermentum (strain NBRC 3956 / LMG 18251) (Lactobacillus fermentum).